A 602-amino-acid chain; its full sequence is 4-hydroxy-3-methylbut-2-en-1-yl diphosphate synthase (flavodoxin) (602 aa).

Cys508, Cys511, Cys543, and Glu550 together coordinate [4Fe-4S] cluster.

This sequence belongs to the IspG family. It depends on [4Fe-4S] cluster as a cofactor.

The enzyme catalyses (2E)-4-hydroxy-3-methylbut-2-enyl diphosphate + oxidized [flavodoxin] + H2O + 2 H(+) = 2-C-methyl-D-erythritol 2,4-cyclic diphosphate + reduced [flavodoxin]. The protein operates within isoprenoid biosynthesis; isopentenyl diphosphate biosynthesis via DXP pathway; isopentenyl diphosphate from 1-deoxy-D-xylulose 5-phosphate: step 5/6. In terms of biological role, converts 2C-methyl-D-erythritol 2,4-cyclodiphosphate (ME-2,4cPP) into 1-hydroxy-2-methyl-2-(E)-butenyl 4-diphosphate. The polypeptide is 4-hydroxy-3-methylbut-2-en-1-yl diphosphate synthase (flavodoxin) (Chlamydia trachomatis serovar L2 (strain ATCC VR-902B / DSM 19102 / 434/Bu)).